The chain runs to 572 residues: 2-hydroxyacyl-CoA lyase (572 aa).

Alanine 2 carries the N-acetylalanine modification. Glutamate 58 provides a ligand contact to thiamine diphosphate. Residues threonine 407–tyrosine 488 form a thiamine pyrophosphate binding region. Mg(2+) contacts are provided by aspartate 457 and asparagine 484.

The protein belongs to the TPP enzyme family. Homotetramer. Mg(2+) is required as a cofactor. Requires thiamine diphosphate as cofactor.

The enzyme catalyses an (R)-2-hydroxy-long-chain-fatty acyl-CoA = a long-chain fatty aldehyde + formyl-CoA. The catalysed reaction is a 2-hydroxy-3-methyl fatty acyl-CoA = a 2-methyl-branched fatty aldehyde + formyl-CoA. In terms of biological role, catalyzes a carbon-carbon cleavage reaction; cleaves a 2-hydroxy-3-methylacyl-CoA into formyl-CoA and a 2-methyl-branched fatty aldehyde. The sequence is that of 2-hydroxyacyl-CoA lyase (HACL) from Arabidopsis thaliana (Mouse-ear cress).